The sequence spans 231 residues: Acyl-protein thioesterase 1 (231 aa).

Active-site charge relay system residues include Ser-121, Asp-178, and His-211.

This sequence belongs to the AB hydrolase superfamily. AB hydrolase 2 family.

It localises to the cytoplasm. It is found in the nucleus. The catalysed reaction is S-hexadecanoyl-L-cysteinyl-[protein] + H2O = L-cysteinyl-[protein] + hexadecanoate + H(+). Hydrolyzes fatty acids from S-acylated cysteine residues in proteins with a strong preference for palmitoylated G-alpha proteins over other acyl substrates. Mediates the deacylation of G-alpha proteins such as GPA1 in vivo, but has weak or no activity toward palmitoylated Ras proteins. Has weak lysophospholipase activity in vitro; however such activity may not exist in vivo. This is Acyl-protein thioesterase 1 from Candida albicans (strain SC5314 / ATCC MYA-2876) (Yeast).